Consider the following 396-residue polypeptide: MAKGKFERTKPHVNVGTIGHVDHGKTTLTAAITTVLASKFGGEAKGYDQIDAAPEEKARGITINTAHVEYETANRHYAHVDCPGHADYVKNMITGAAQMDGAILVCSAADGPMPQTREHILLARQVGVPYIIVFLNKCDMVDDAELLELVEMEVRELLDKYDFPGDKTPIIHGSAKLAMEGDKGPLGEQAIMKLADALDTYIPLPERAVDGAFLMPVEDVFSISGRGTVVTGRVERGVIKVGEEIEIVGIADTQKTTCTGVEMFRKLLDQGQAGDNVGILLRGTKREDVQRGQVLCKPGSIKPHTHFTGEIYVLSKDEGGRHTPFFNNYRPQFYFRTTDVTGAIELPEGKEMVMPGDNVSITVKLINPIAMEEGLRFAIREGGKTVGAGVVAKIIA.

In terms of domain architecture, tr-type G spans 10 to 206 (KPHVNVGTIG…ALDTYIPLPE (197 aa)). The tract at residues 19–26 (GHVDHGKT) is G1. 19–26 (GHVDHGKT) is a GTP binding site. A Mg(2+)-binding site is contributed by Thr26. The segment at 60–64 (GITIN) is G2. A G3 region spans residues 81-84 (DCPG). Residues 81–85 (DCPGH) and 136–139 (NKCD) each bind GTP. The tract at residues 136–139 (NKCD) is G4. Residues 174–176 (SAK) form a G5 region.

It belongs to the TRAFAC class translation factor GTPase superfamily. Classic translation factor GTPase family. EF-Tu/EF-1A subfamily. In terms of assembly, monomer.

Its subcellular location is the cytoplasm. It catalyses the reaction GTP + H2O = GDP + phosphate + H(+). Its function is as follows. GTP hydrolase that promotes the GTP-dependent binding of aminoacyl-tRNA to the A-site of ribosomes during protein biosynthesis. The sequence is that of Elongation factor Tu from Polaromonas sp. (strain JS666 / ATCC BAA-500).